We begin with the raw amino-acid sequence, 266 residues long: Small ribosomal subunit protein uS2 (266 aa).

The protein belongs to the universal ribosomal protein uS2 family.

This chain is Small ribosomal subunit protein uS2, found in Corynebacterium diphtheriae (strain ATCC 700971 / NCTC 13129 / Biotype gravis).